The following is a 195-amino-acid chain: Dephospho-CoA kinase (195 aa).

One can recognise a DPCK domain in the interval Ile-4–Leu-195. Position 12–17 (Ala-12–Thr-17) interacts with ATP.

Belongs to the CoaE family.

It localises to the cytoplasm. It catalyses the reaction 3'-dephospho-CoA + ATP = ADP + CoA + H(+). It participates in cofactor biosynthesis; coenzyme A biosynthesis; CoA from (R)-pantothenate: step 5/5. Its function is as follows. Catalyzes the phosphorylation of the 3'-hydroxyl group of dephosphocoenzyme A to form coenzyme A. This is Dephospho-CoA kinase from Streptococcus agalactiae serotype Ia (strain ATCC 27591 / A909 / CDC SS700).